A 92-amino-acid polypeptide reads, in one-letter code: MLCAVYKSSRKADTYLFVKKRDCFDDVPAPLMEMFGVPKLVMVFPIAKRDALGMADIQKVRAAMEENGFYLQIPPPQVNLLAEHKLSLGIKD.

One can recognise a YcgL domain in the interval 1 to 85 (MLCAVYKSSR…PQVNLLAEHK (85 aa)).

This chain is YcgL domain-containing protein Sbal_1869, found in Shewanella baltica (strain OS155 / ATCC BAA-1091).